The sequence spans 318 residues: Ferredoxin--NADP reductase (318 aa).

FAD is bound by residues Asp33, Gln41, Tyr46, Val84, Phe115, Asp276, and Thr316.

The protein belongs to the ferredoxin--NADP reductase type 2 family. As to quaternary structure, homodimer. It depends on FAD as a cofactor.

It catalyses the reaction 2 reduced [2Fe-2S]-[ferredoxin] + NADP(+) + H(+) = 2 oxidized [2Fe-2S]-[ferredoxin] + NADPH. This is Ferredoxin--NADP reductase from Lactobacillus johnsonii (strain CNCM I-12250 / La1 / NCC 533).